Reading from the N-terminus, the 150-residue chain is Large ribosomal subunit protein eL19 (150 aa).

The tract at residues 56-90 is disordered; sequence RGISSGRLKERKHKRRSKGEGRKHGSRKGKSGART.

It belongs to the eukaryotic ribosomal protein eL19 family. As to quaternary structure, part of the 50S ribosomal subunit.

Functionally, binds to the 23S rRNA. This is Large ribosomal subunit protein eL19 from Sulfolobus acidocaldarius (strain ATCC 33909 / DSM 639 / JCM 8929 / NBRC 15157 / NCIMB 11770).